A 664-amino-acid polypeptide reads, in one-letter code: MNINHKGVLKLTKMEKKFLRKQSKARHVLLKHEGIQAVSYPTQSLVIANGGLGNGVSRKQLLLTLEKCGPVEALLMPPNKPYAFVIFQTIEESKKAYFTLNGKEIIDDLGQKIFLYLNFVEKAQWKNMGLEALPPGLLVVEEIISSEEEKKLLESVNWTEDTGNQNFQRSLKHRRVKHFGYEFHYESNTVDKDKPLPGGLPEVCSSILEKLLKEGYIKHKPDQLTINQYEPGHGIPAHIDTHSAFEDEIISLSLGSAIVMDFKHPEGVTVQVMLPRRSLLVMTGESRYLWTHGITPRKFDTVQASEQFKGGIITSDIGDLTLSKRGMRTSFTFRKVRRMPCNCSYSSVCDRQRKATPPSLTESSKEALELEQKHVHQVYNEIASHFSSTRHSPWPRIVEFLKALPSGSIVADIGCGNGKYLGINKDLYMIGCDRSQNLVDICRERQFQALVCDALAVPVRSGSCDACISIAVIHHFATAERRVEALQELARLLRPGGQALIYVWAMEQEYKNQKSKYLRGKRISQGDKDELNSATSTEEFLVNQTPEGVNEDPALSVNSSSITKEEEYKSRKVPNSELPIHINRTCFHSQDVLVPWHLKRNPGKDKAIEPSGVAGCPDPSPVFHRYYHVFCDGELEASCQAVGDVSILQSYYDQGNWCVVLQKV.

Residues L45–V120 enclose the RRM domain. Residues K220–R337 form the Fe2OG dioxygenase domain. Position 227-229 (N227–Y229) interacts with 2-oxoglutarate. Fe cation contacts are provided by H238 and D240. Position 242 (H242) interacts with Zn(2+). H292 is a Fe cation binding site. The 2-oxoglutarate site is built by R328 and R334. Zn(2+)-binding residues include C341, C343, and C349. The tract at residues A411–V664 is methyltransferase domain.

Belongs to the alkB family. As to quaternary structure, interacts with TRMT112. Fe(2+) is required as a cofactor.

The protein localises to the cytoplasm. It localises to the nucleus. It catalyses the reaction 5-(carboxymethyl)uridine(34) in tRNA + S-adenosyl-L-methionine = 5-(2-methoxy-2-oxoethyl)uridine(34) in tRNA + S-adenosyl-L-homocysteine. Its function is as follows. Catalyzes the methylation of 5-carboxymethyl uridine to 5-methylcarboxymethyl uridine at the wobble position of the anticodon loop in tRNA via its methyltransferase domain. Catalyzes the last step in the formation of 5-methylcarboxymethyl uridine at the wobble position of the anticodon loop in target tRNA. Has a preference for tRNA(Arg) and tRNA(Glu), and does not bind tRNA(Lys). Binds tRNA and catalyzes the iron and alpha-ketoglutarate dependent hydroxylation of 5-methylcarboxymethyl uridine at the wobble position of the anticodon loop in tRNA via its dioxygenase domain, giving rise to 5-(S)-methoxycarbonylhydroxymethyluridine; has a preference for tRNA(Gly). Required for normal survival after DNA damage. May inhibit apoptosis and promote cell survival and angiogenesis. The polypeptide is tRNA (carboxymethyluridine(34)-5-O)-methyltransferase ALKBH8 (Alkbh8) (Mus musculus (Mouse)).